The chain runs to 529 residues: ATP synthase F(1) complex catalytic subunit beta, mitochondrial (529 aa).

The N-terminal 46 residues, 1–46 (MLSLVGRVASASASGALRGLNPLAALPQAHLLLRTAPAGVHPARDY), are a transit peptide targeting the mitochondrion. Ser-106 carries an O-linked (GlcNAc) serine glycan. Residues Lys-124, Lys-133, and Lys-161 each carry the N6-acetyllysine; alternate modification. N6-succinyllysine; alternate is present on residues Lys-124, Lys-133, and Lys-161. The residue at position 198 (Lys-198) is an N6-acetyllysine. The ADP site is built by Gly-209, Val-210, Gly-211, Lys-212, Thr-213, and Val-214. Gly-209 contacts ATP. Phosphate-binding residues include Gly-209, Val-210, Gly-211, Lys-212, and Thr-213. Residues Gly-211, Lys-212, Thr-213, and Val-214 each contribute to the ATP site. Thr-213 serves as a coordination point for Mg(2+). Glu-238 provides a ligand contact to Mg(2+). Position 239 (Arg-239) interacts with ATP. 2 positions are modified to N6-acetyllysine; alternate: Lys-259 and Lys-264. An N6-succinyllysine; alternate mark is found at Lys-259 and Lys-264. Thr-312 carries the phosphothreonine modification. Residue Ser-415 is modified to Phosphoserine. An N6-acetyllysine modification is found at Lys-426. At Ser-433 the chain carries Phosphoserine. N6-acetyllysine occurs at positions 480 and 485. Residue Lys-522 is modified to N6-acetyllysine; alternate. Lys-522 is subject to N6-succinyllysine; alternate. Ser-529 carries the post-translational modification Phosphoserine.

Belongs to the ATPase alpha/beta chains family. Homotrimer. Component of the ATP synthase complex composed at least of ATP5F1A/subunit alpha, ATP5F1B/subunit beta, ATP5MC1/subunit c (homooctomer), MT-ATP6/subunit a, MT-ATP8/subunit 8, ATP5ME/subunit e, ATP5MF/subunit f, ATP5MG/subunit g, ATP5MK/subunit k, ATP5MJ/subunit j, ATP5F1C/subunit gamma, ATP5F1D/subunit delta, ATP5F1E/subunit epsilon, ATP5PF/subunit F6, ATP5PB/subunit b, ATP5PD/subunit d, ATP5PO/subunit OSCP. ATP synthase complex consists of a soluble F(1) head domain (subunits alpha(3) and beta(3)) - the catalytic core - and a membrane F(0) domain - the membrane proton channel (subunits c, a, 8, e, f, g, k and j). These two domains are linked by a central stalk (subunits gamma, delta, and epsilon) rotating inside the F1 region and a stationary peripheral stalk (subunits F6, b, d, and OSCP). Interacts with PPIF. Interacts with BCL2L1 isoform BCL-X(L); the interaction mediates the association of BCL2L1 isoform BCL-X(L) with the mitochondrial membrane F(1)F(0) ATP synthase and enhances neurons metabolic efficiency. Interacts with CLN5 and PPT1. Interacts with S100A1; this interaction increases F1-ATPase activity. Interacts with MTLN. Interacts with TTC5/STRAP; the interaction results in decreased mitochondrial ATP production.

The protein resides in the mitochondrion inner membrane. It carries out the reaction ATP + H2O + 4 H(+)(in) = ADP + phosphate + 5 H(+)(out). Catalytic subunit beta, of the soluble F(1) head domain within the mitochondrial ATP synthase complex (F(1)F(0) ATP synthase or complex V) that produces ATP from ADP and phosphate inorganique in the presence of a proton gradient across the membrane which is generated by electron transport complexes of the respiratory chain. With the non-catalytic subunit alpha (ATP5F1A), forms the catalytic core in the F(1) domain. ATP synthase complex consist of two structural domains, F(1) - containing the extramembraneous catalytic core, and F(0) - containing the membrane proton channel, linked together by a central stalk and a peripheral stalk. During catalysis, ATP synthesis in the catalytic domain of F(1) is coupled via a rotary mechanism of the central stalk subunits to proton translocation. In terms of biological role, catalytic subunit beta, of the mitochondrial membrane ATP synthase complex (F(1)F(0) ATP synthase or Complex V) that produces ATP from ADP in the presence of a proton gradient across the membrane which is generated by electron transport complexes of the respiratory chain. ATP synthase complex consist of a soluble F(1) head domain - the catalytic core - and a membrane F(1) domain - the membrane proton channel. These two domains are linked by a central stalk rotating inside the F(1) region and a stationary peripheral stalk. During catalysis, ATP synthesis in the catalytic domain of F(1) is coupled via a rotary mechanism of the central stalk subunits to proton translocation. In vivo, can only synthesize ATP although its ATP hydrolase activity can be activated artificially in vitro. With the subunit alpha (ATP5F1A), forms the catalytic core in the F(1) domain. The polypeptide is ATP synthase F(1) complex catalytic subunit beta, mitochondrial (Rattus norvegicus (Rat)).